The chain runs to 374 residues: MNALFIIIFMIVVGAIIGGITNVIAIRMLFHPFKPYYIFKFRVPFTPGLIPKRREEIATKIGQVIEEHLLTETLINEKLKSEQSQQAIESMIQQQLQKLTKDQLSIKQITSQIDIDLEQVLQTNGNQYIESQLNNYYTKHQNQTIASLLPNQLVTFLDQHVDNATDLLCDRARNYLSSAKGTQDINDMLDTFFHEKGKLIGMLQMFMTKESIADRIQQELIRLTSHPKARTIVTSLITNEYQTFKDKPLNELLDASQFNEIAENLSVYVTTYASNQANKPVVTLMPQFVDYLEGQLSSKLANLIIEKLSIHLSTIMKKVDLRGLIEEQINTFDLDYIEKLIIEIANKELKLIMSLGFILGGIIGFFQGLVAIFV.

2 helical membrane passes run 4 to 24 (LFII…TNVI) and 354 to 374 (SLGF…AIFV).

Belongs to the UPF0754 family.

It is found in the cell membrane. The polypeptide is UPF0754 membrane protein SA1664 (Staphylococcus aureus (strain N315)).